The sequence spans 362 residues: Putative sphingolipid delta(4)-desaturase/C4-monooxygenase (362 aa).

3 helical membrane passes run 45–61, 71–91, and 107–127; these read YVVS…CWLL, LEAY…IHDI, and FFGM…FKKY. The short motif at 89-93 is the Histidine box-1 element; the sequence is HDISH. Residues 128–132 carry the Histidine box-2 motif; it reads HVEHH. A run of 2 helical transmembrane segments spans residues 160-177 and 198-218; these read LLWL…PLII and LLIL…GTII. Positions 259-263 match the Histidine box-3 motif; the sequence is HVEHH.

It belongs to the fatty acid desaturase type 1 family. DEGS subfamily.

The protein resides in the membrane. It carries out the reaction an N-acyl-15-methylhexadecasphinganine + 2 Fe(II)-[cytochrome b5] + O2 + 2 H(+) = an N-acyl-4-hydroxy-15-methylhexadecasphinganine + 2 Fe(III)-[cytochrome b5] + H2O. The catalysed reaction is an N-acyl-15-methylhexadecasphinganine + 2 Fe(II)-[cytochrome b5] + O2 + 2 H(+) = an N-acyl-15-methylhexadecasphing-4-enine + 2 Fe(III)-[cytochrome b5] + 2 H2O. The enzyme catalyses a dihydroceramide + 2 Fe(II)-[cytochrome b5] + O2 + 2 H(+) = a phytoceramide + 2 Fe(III)-[cytochrome b5] + H2O. It catalyses the reaction an N-acylsphinganine + 2 Fe(II)-[cytochrome b5] + O2 + 2 H(+) = an N-acylsphing-4-enine + 2 Fe(III)-[cytochrome b5] + 2 H2O. It carries out the reaction N-octanoylsphinganine + 2 Fe(II)-[cytochrome b5] + O2 + 2 H(+) = N-octanoyl-4-hydroxysphinganine + 2 Fe(III)-[cytochrome b5] + H2O. The catalysed reaction is an N-acylsphinganine + 2 Fe(II)-[cytochrome b5] + O2 + 2 H(+) = an N-acyl-(4R)-4-hydroxysphinganine + 2 Fe(III)-[cytochrome b5] + H2O. Its pathway is lipid metabolism; sphingolipid metabolism. Its function is as follows. Bifunctional enzyme which acts both as a sphingolipid delta(4)-desaturase and a sphingolipid C4-monooxygenase. C.elegans contain specific sphingoid bases, which are unique or different in structure compared to the sphingoid bases found in other animals. Two examples of these distinctive compounds are: 15-methylhexadecasphinganine and 15-methylhexadecasphing-4-enine and this enzyme can catalyze their conversion. This is Putative sphingolipid delta(4)-desaturase/C4-monooxygenase (ttm-5) from Caenorhabditis elegans.